Consider the following 138-residue polypeptide: Protein transport protein got1 homolog (138 aa).

At 1–7 (MFTDQQK) the chain is on the cytoplasmic side. A helical membrane pass occupies residues 8-28 (IGAMLSAMGLFFGFLGVLLFL). Over 29–30 (DR) the chain is Lumenal. Residues 31 to 51 (NLLALGNLLLVSGIVLILGLQ) form a helical membrane-spanning segment. At 52–62 (KTTKFFAQKKK) the chain is on the cytoplasmic side. Residues 63–82 (IKGTILFFFGIVVLLVTRWT) form a helical membrane-spanning segment. The Lumenal segment spans residues 83–87 (FVGMV). Residues 88–108 (IEIFGFVNLFGDAFPIVISIL) traverse the membrane as a helical segment. Residues 109-138 (RKLPIIGNILNHPLVNRLLQKADSGNELPF) are Cytoplasmic-facing.

Belongs to the GOT1 family.

It localises to the golgi apparatus membrane. May be involved in fusion of ER-derived transport vesicles with the Golgi complex. The chain is Protein transport protein got1 homolog (golt1) from Dictyostelium discoideum (Social amoeba).